Here is an 809-residue protein sequence, read N- to C-terminus: Phenylalanine--tRNA ligase beta subunit (809 aa).

Positions 39 to 154 (APPTSKIVVG…EDTPVGQDIR (116 aa)) constitute a tRNA-binding domain. In terms of domain architecture, B5 spans 405 to 480 (PQRAPVKMRV…RIYGFEKIPA (76 aa)). 4 residues coordinate Mg(2+): D458, D464, E467, and E468. In terms of domain architecture, FDX-ACB spans 707–808 (SKFPPVRRDI…RMARAGARLR (102 aa)).

Belongs to the phenylalanyl-tRNA synthetase beta subunit family. Type 1 subfamily. Tetramer of two alpha and two beta subunits. Mg(2+) is required as a cofactor.

It is found in the cytoplasm. It carries out the reaction tRNA(Phe) + L-phenylalanine + ATP = L-phenylalanyl-tRNA(Phe) + AMP + diphosphate + H(+). This is Phenylalanine--tRNA ligase beta subunit from Burkholderia lata (strain ATCC 17760 / DSM 23089 / LMG 22485 / NCIMB 9086 / R18194 / 383).